The chain runs to 295 residues: GTPase Era (295 aa).

The Era-type G domain maps to 3 to 170 (KSGFVTIVGR…VDLMKTELPE (168 aa)). Residues 11-18 (GRPNVGKS) form a G1 region. 11–18 (GRPNVGKS) lines the GTP pocket. Residues 37–41 (QTTRN) are G2. The segment at 58–61 (DTPG) is G3. GTP is bound by residues 58-62 (DTPGI) and 120-123 (NKID). The G4 stretch occupies residues 120–123 (NKID). The tract at residues 149–151 (IAA) is G5. The KH type-2 domain maps to 201–278 (LRDEVPHGIA…NVKIWVKVRK (78 aa)).

The protein belongs to the TRAFAC class TrmE-Era-EngA-EngB-Septin-like GTPase superfamily. Era GTPase family. In terms of assembly, monomer.

It localises to the cytoplasm. Its subcellular location is the cell membrane. Its function is as follows. An essential GTPase that binds both GDP and GTP, with rapid nucleotide exchange. Plays a role in 16S rRNA processing and 30S ribosomal subunit biogenesis and possibly also in cell cycle regulation and energy metabolism. This is GTPase Era from Clostridium botulinum (strain Eklund 17B / Type B).